Reading from the N-terminus, the 747-residue chain is DNA ligase (747 aa).

Residues 33–37 (DEEYD), 83–84 (SL), and glutamate 113 each bind NAD(+). Lysine 115 serves as the catalytic N6-AMP-lysine intermediate. Residues arginine 136, glutamate 174, lysine 299, and lysine 323 each contribute to the NAD(+) site. Positions 417, 420, 436, and 442 each coordinate Zn(2+). The 89-residue stretch at 659-747 (TGGGVLSGLT…GPGALPEVAE (89 aa)) folds into the BRCT domain.

Belongs to the NAD-dependent DNA ligase family. LigA subfamily. It depends on Mg(2+) as a cofactor. The cofactor is Mn(2+).

It catalyses the reaction NAD(+) + (deoxyribonucleotide)n-3'-hydroxyl + 5'-phospho-(deoxyribonucleotide)m = (deoxyribonucleotide)n+m + AMP + beta-nicotinamide D-nucleotide.. Functionally, DNA ligase that catalyzes the formation of phosphodiester linkages between 5'-phosphoryl and 3'-hydroxyl groups in double-stranded DNA using NAD as a coenzyme and as the energy source for the reaction. It is essential for DNA replication and repair of damaged DNA. The sequence is that of DNA ligase from Leifsonia xyli subsp. xyli (strain CTCB07).